Here is a 91-residue protein sequence, read N- to C-terminus: MARVTVQDAVEKIGNRFDLVLVAARRARQIQTGGKDALVPEENDKYTVIALREIEEGLITSQILDVRDRQEQQEQEAAEIQAVTAIAEGRR.

It belongs to the RNA polymerase subunit omega family. In terms of assembly, the RNAP catalytic core consists of 2 alpha, 1 beta, 1 beta' and 1 omega subunit. When a sigma factor is associated with the core the holoenzyme is formed, which can initiate transcription.

It carries out the reaction RNA(n) + a ribonucleoside 5'-triphosphate = RNA(n+1) + diphosphate. Its function is as follows. Promotes RNA polymerase assembly. Latches the N- and C-terminal regions of the beta' subunit thereby facilitating its interaction with the beta and alpha subunits. This chain is DNA-directed RNA polymerase subunit omega, found in Serratia proteamaculans (strain 568).